Reading from the N-terminus, the 151-residue chain is Ribosomal RNA large subunit methyltransferase H (151 aa).

S-adenosyl-L-methionine contacts are provided by residues G100 and 119–124; that span reads LSRMTF.

This sequence belongs to the RNA methyltransferase RlmH family. As to quaternary structure, homodimer.

The protein localises to the cytoplasm. It catalyses the reaction pseudouridine(1915) in 23S rRNA + S-adenosyl-L-methionine = N(3)-methylpseudouridine(1915) in 23S rRNA + S-adenosyl-L-homocysteine + H(+). In terms of biological role, specifically methylates the pseudouridine at position 1915 (m3Psi1915) in 23S rRNA. The sequence is that of Ribosomal RNA large subunit methyltransferase H from Thermotoga neapolitana (strain ATCC 49049 / DSM 4359 / NBRC 107923 / NS-E).